An 85-amino-acid chain; its full sequence is Small ribosomal subunit protein bS20 (85 aa).

Belongs to the bacterial ribosomal protein bS20 family.

In terms of biological role, binds directly to 16S ribosomal RNA. The chain is Small ribosomal subunit protein bS20 from Borreliella afzelii (strain PKo) (Borrelia afzelii).